Here is a 217-residue protein sequence, read N- to C-terminus: dITP/XTP pyrophosphatase (217 aa).

7–12 (SRNKKK) contacts substrate. The Proton acceptor role is filled by aspartate 72. Aspartate 72 is a binding site for Mg(2+). Residues serine 73, 163–166 (FGYD), lysine 195, and 200–201 (HR) contribute to the substrate site.

Belongs to the HAM1 NTPase family. Homodimer. It depends on Mg(2+) as a cofactor.

It catalyses the reaction XTP + H2O = XMP + diphosphate + H(+). The enzyme catalyses dITP + H2O = dIMP + diphosphate + H(+). It carries out the reaction ITP + H2O = IMP + diphosphate + H(+). Pyrophosphatase that catalyzes the hydrolysis of nucleoside triphosphates to their monophosphate derivatives, with a high preference for the non-canonical purine nucleotides XTP (xanthosine triphosphate), dITP (deoxyinosine triphosphate) and ITP. Seems to function as a house-cleaning enzyme that removes non-canonical purine nucleotides from the nucleotide pool, thus preventing their incorporation into DNA/RNA and avoiding chromosomal lesions. This Corynebacterium jeikeium (strain K411) protein is dITP/XTP pyrophosphatase.